A 452-amino-acid polypeptide reads, in one-letter code: tRNA modification GTPase MnmE (452 aa).

Residues Arg-22, Glu-80, and Lys-119 each coordinate (6S)-5-formyl-5,6,7,8-tetrahydrofolate. Positions 213 to 375 constitute a TrmE-type G domain; it reads GVRTVIVGKP…LENKIYEKFF (163 aa). Asn-223 is a binding site for K(+). GTP is bound by residues 223–228, 242–248, and 267–270; these read NSGKST, TDIPGTT, and DTAG. Ser-227 contributes to the Mg(2+) binding site. K(+)-binding residues include Thr-242, Ile-244, and Thr-247. Residue Thr-248 coordinates Mg(2+). Lys-452 contributes to the (6S)-5-formyl-5,6,7,8-tetrahydrofolate binding site.

It belongs to the TRAFAC class TrmE-Era-EngA-EngB-Septin-like GTPase superfamily. TrmE GTPase family. Homodimer. Heterotetramer of two MnmE and two MnmG subunits. The cofactor is K(+).

It is found in the cytoplasm. Its function is as follows. Exhibits a very high intrinsic GTPase hydrolysis rate. Involved in the addition of a carboxymethylaminomethyl (cmnm) group at the wobble position (U34) of certain tRNAs, forming tRNA-cmnm(5)s(2)U34. The polypeptide is tRNA modification GTPase MnmE (Petrotoga mobilis (strain DSM 10674 / SJ95)).